A 359-amino-acid chain; its full sequence is tRNA-specific 2-thiouridylase MnmA (359 aa).

Residues 6 to 13 (AMSGGVDS) and Leu-32 contribute to the ATP site. The active-site Nucleophile is the Cys-97. A disulfide bridge connects residues Cys-97 and Cys-195. Gly-121 contributes to the ATP binding site. The segment at 144 to 146 (KDQ) is interaction with tRNA. Cys-195 (cysteine persulfide intermediate) is an active-site residue.

This sequence belongs to the MnmA/TRMU family.

Its subcellular location is the cytoplasm. It carries out the reaction S-sulfanyl-L-cysteinyl-[protein] + uridine(34) in tRNA + AH2 + ATP = 2-thiouridine(34) in tRNA + L-cysteinyl-[protein] + A + AMP + diphosphate + H(+). Functionally, catalyzes the 2-thiolation of uridine at the wobble position (U34) of tRNA, leading to the formation of s(2)U34. This chain is tRNA-specific 2-thiouridylase MnmA, found in Tropheryma whipplei (strain TW08/27) (Whipple's bacillus).